Here is a 1002-residue protein sequence, read N- to C-terminus: Probable transport protein MmpL10 (1002 aa).

Transmembrane regions (helical) follow at residues 1 to 21 (MVGC…SLAE), 177 to 197 (IAVM…TMLL), 199 to 219 (LVTI…VSLV), 228 to 248 (AIVL…VFLI), 268 to 288 (AMMS…ITFL), 306 to 326 (AIGI…ILVL), 358 to 378 (YLGA…LAHF), 806 to 826 (IVAV…RAIV), 835 to 855 (VVIS…VFLG), 862 to 882 (VPGL…MLLA), 901 to 921 (VRCT…SMSG), and 923 to 943 (LFSS…GILI).

It belongs to the resistance-nodulation-cell division (RND) (TC 2.A.6) family. MmpL subfamily.

Its subcellular location is the cell membrane. The sequence is that of Probable transport protein MmpL10 (mmpL10) from Mycobacterium bovis (strain ATCC BAA-935 / AF2122/97).